The following is a 319-amino-acid chain: Beta-ketoacyl-[acyl-carrier-protein] synthase III (319 aa).

Residues Cys-114 and His-246 contribute to the active site. Residues 247-251 are ACP-binding; that stretch reads QANIR. Asn-276 is an active-site residue.

It belongs to the thiolase-like superfamily. FabH family. In terms of assembly, homodimer.

It localises to the cytoplasm. The enzyme catalyses malonyl-[ACP] + acetyl-CoA + H(+) = 3-oxobutanoyl-[ACP] + CO2 + CoA. It functions in the pathway lipid metabolism; fatty acid biosynthesis. Its function is as follows. Catalyzes the condensation reaction of fatty acid synthesis by the addition to an acyl acceptor of two carbons from malonyl-ACP. Catalyzes the first condensation reaction which initiates fatty acid synthesis and may therefore play a role in governing the total rate of fatty acid production. Possesses both acetoacetyl-ACP synthase and acetyl transacylase activities. Its substrate specificity determines the biosynthesis of branched-chain and/or straight-chain of fatty acids. This chain is Beta-ketoacyl-[acyl-carrier-protein] synthase III, found in Thiobacillus denitrificans (strain ATCC 25259 / T1).